The sequence spans 127 residues: Holo-[acyl-carrier-protein] synthase (127 aa).

2 residues coordinate Mg(2+): aspartate 9 and glutamate 58.

This sequence belongs to the P-Pant transferase superfamily. AcpS family. Requires Mg(2+) as cofactor.

The protein localises to the cytoplasm. It catalyses the reaction apo-[ACP] + CoA = holo-[ACP] + adenosine 3',5'-bisphosphate + H(+). Transfers the 4'-phosphopantetheine moiety from coenzyme A to a Ser of acyl-carrier-protein. The protein is Holo-[acyl-carrier-protein] synthase of Shewanella sp. (strain W3-18-1).